The primary structure comprises 311 residues: MRALFFGTPAIAVPSLEALASIADVVGVVCQPDRPAGRGLELKAPPVKVKALELGVPVLQPEKVRTPEFAAWVAGAGADVALVIAYGRILPKAVLEAPRRGCMNLHASILPRYRGAAPITWAIVGGETETGISLMQMDEGMDTGPVYAVRRTPIGPDTTADELAIDLGALAARVVREDLRRAVDGELAPTPQDHEAATHAALLKKEDGRIRWERSARQIHDHIRGMTSWPGAFTTIDGKALKVLAAHVESEADQGGAPPGTVVMAGRSVVVVACGAGAIQIVRAQVEGRKPLAAADLVAGRTLQAGMVLGR.

108-111 provides a ligand contact to (6S)-5,6,7,8-tetrahydrofolate; sequence SILP.

This sequence belongs to the Fmt family.

It catalyses the reaction L-methionyl-tRNA(fMet) + (6R)-10-formyltetrahydrofolate = N-formyl-L-methionyl-tRNA(fMet) + (6S)-5,6,7,8-tetrahydrofolate + H(+). Attaches a formyl group to the free amino group of methionyl-tRNA(fMet). The formyl group appears to play a dual role in the initiator identity of N-formylmethionyl-tRNA by promoting its recognition by IF2 and preventing the misappropriation of this tRNA by the elongation apparatus. The protein is Methionyl-tRNA formyltransferase of Sorangium cellulosum (strain So ce56) (Polyangium cellulosum (strain So ce56)).